The following is a 264-amino-acid chain: 3-methyl-2-oxobutanoate hydroxymethyltransferase (264 aa).

2 residues coordinate Mg(2+): aspartate 45 and aspartate 84. Residues 45 to 46, aspartate 84, and lysine 112 contribute to the 3-methyl-2-oxobutanoate site; that span reads DS. Glutamate 114 contacts Mg(2+). Glutamate 181 (proton acceptor) is an active-site residue.

The protein belongs to the PanB family. In terms of assembly, homodecamer; pentamer of dimers. The cofactor is Mg(2+).

The protein resides in the cytoplasm. The enzyme catalyses 3-methyl-2-oxobutanoate + (6R)-5,10-methylene-5,6,7,8-tetrahydrofolate + H2O = 2-dehydropantoate + (6S)-5,6,7,8-tetrahydrofolate. It participates in cofactor biosynthesis; (R)-pantothenate biosynthesis; (R)-pantoate from 3-methyl-2-oxobutanoate: step 1/2. Functionally, catalyzes the reversible reaction in which hydroxymethyl group from 5,10-methylenetetrahydrofolate is transferred onto alpha-ketoisovalerate to form ketopantoate. The chain is 3-methyl-2-oxobutanoate hydroxymethyltransferase from Shewanella putrefaciens (strain CN-32 / ATCC BAA-453).